A 35-amino-acid chain; its full sequence is Riboflavin-binding protein (35 aa).

Residues cysteine 5 and cysteine 32 are joined by a disulfide bond.

This sequence belongs to the folate receptor family.

Functionally, required for the transport of riboflavin to the developing oocyte. This Struthio camelus (Common ostrich) protein is Riboflavin-binding protein.